A 376-amino-acid chain; its full sequence is Glutamate 5-kinase (376 aa).

Residue Lys23 coordinates ATP. Substrate is bound by residues Ser63, Asp150, and Asn162. ATP contacts are provided by residues 182–183 (SD) and 222–228 (TGGMASK). The 75-residue stretch at 284-358 (GGALRIDAGA…GKQTAQLPEG (75 aa)) folds into the PUA domain.

The protein belongs to the glutamate 5-kinase family.

It localises to the cytoplasm. The enzyme catalyses L-glutamate + ATP = L-glutamyl 5-phosphate + ADP. It participates in amino-acid biosynthesis; L-proline biosynthesis; L-glutamate 5-semialdehyde from L-glutamate: step 1/2. Functionally, catalyzes the transfer of a phosphate group to glutamate to form L-glutamate 5-phosphate. The polypeptide is Glutamate 5-kinase (Corynebacterium diphtheriae (strain ATCC 700971 / NCTC 13129 / Biotype gravis)).